A 340-amino-acid chain; its full sequence is Phospho-N-acetylmuramoyl-pentapeptide-transferase (340 aa).

10 helical membrane-spanning segments follow: residues 5–25, 50–70, 73–93, 113–133, 147–167, 178–198, 218–238, 242–262, 267–287, and 318–338; these read FILSFFTSLLLMLIFGPHLIN, TPTMGGILIIFSIIISTIIWT, SNPYVWLTLTILIGYGIIGFI, FSLLSILACIIIFLIYYIIND, IIFNTKMICILISYFAIIGTS, GLAIVPIIFVTTNLSIISFIS, LTIICAAIIGSSLGFLWFNTY, IFMGDVGSLSLGGTIGIISVL, ILLIIVGGLFVIETLSVIIQV, and IIRFWIISFILMLLGLLMLKV.

Belongs to the glycosyltransferase 4 family. MraY subfamily. The cofactor is Mg(2+).

It localises to the cell membrane. It catalyses the reaction UDP-N-acetyl-alpha-D-muramoyl-L-alanyl-gamma-D-glutamyl-meso-2,6-diaminopimeloyl-D-alanyl-D-alanine + di-trans,octa-cis-undecaprenyl phosphate = di-trans,octa-cis-undecaprenyl diphospho-N-acetyl-alpha-D-muramoyl-L-alanyl-D-glutamyl-meso-2,6-diaminopimeloyl-D-alanyl-D-alanine + UMP. It functions in the pathway cell wall biogenesis; peptidoglycan biosynthesis. Functionally, catalyzes the initial step of the lipid cycle reactions in the biosynthesis of the cell wall peptidoglycan: transfers peptidoglycan precursor phospho-MurNAc-pentapeptide from UDP-MurNAc-pentapeptide onto the lipid carrier undecaprenyl phosphate, yielding undecaprenyl-pyrophosphoryl-MurNAc-pentapeptide, known as lipid I. This Buchnera aphidicola subsp. Baizongia pistaciae (strain Bp) protein is Phospho-N-acetylmuramoyl-pentapeptide-transferase.